A 257-amino-acid polypeptide reads, in one-letter code: Thiazole synthase (257 aa).

Catalysis depends on Lys-96, which acts as the Schiff-base intermediate with DXP. Residues Gly-157, 184 to 185 (AG), and 206 to 207 (NT) each bind 1-deoxy-D-xylulose 5-phosphate.

Belongs to the ThiG family. In terms of assembly, homotetramer. Forms heterodimers with either ThiH or ThiS.

It localises to the cytoplasm. The catalysed reaction is [ThiS sulfur-carrier protein]-C-terminal-Gly-aminoethanethioate + 2-iminoacetate + 1-deoxy-D-xylulose 5-phosphate = [ThiS sulfur-carrier protein]-C-terminal Gly-Gly + 2-[(2R,5Z)-2-carboxy-4-methylthiazol-5(2H)-ylidene]ethyl phosphate + 2 H2O + H(+). It participates in cofactor biosynthesis; thiamine diphosphate biosynthesis. In terms of biological role, catalyzes the rearrangement of 1-deoxy-D-xylulose 5-phosphate (DXP) to produce the thiazole phosphate moiety of thiamine. Sulfur is provided by the thiocarboxylate moiety of the carrier protein ThiS. In vitro, sulfur can be provided by H(2)S. The protein is Thiazole synthase of Bartonella henselae (strain ATCC 49882 / DSM 28221 / CCUG 30454 / Houston 1) (Rochalimaea henselae).